Reading from the N-terminus, the 490-residue chain is Cytochrome P450 2C20 (490 aa).

Heme is bound at residue Cys435.

The protein belongs to the cytochrome P450 family. It depends on heme as a cofactor.

It is found in the endoplasmic reticulum membrane. The protein resides in the microsome membrane. The enzyme catalyses an organic molecule + reduced [NADPH--hemoprotein reductase] + O2 = an alcohol + oxidized [NADPH--hemoprotein reductase] + H2O + H(+). Its function is as follows. Cytochromes P450 are a group of heme-thiolate monooxygenases. In liver microsomes, this enzyme is involved in an NADPH-dependent electron transport pathway. It oxidizes a variety of structurally unrelated compounds, including steroids, fatty acids, and xenobiotics. The polypeptide is Cytochrome P450 2C20 (CYP2C20) (Macaca fascicularis (Crab-eating macaque)).